The sequence spans 165 residues: UPF0303 protein Bamb_1459 (165 aa).

Belongs to the UPF0303 family.

This Burkholderia ambifaria (strain ATCC BAA-244 / DSM 16087 / CCUG 44356 / LMG 19182 / AMMD) (Burkholderia cepacia (strain AMMD)) protein is UPF0303 protein Bamb_1459.